An 89-amino-acid polypeptide reads, in one-letter code: Putative defensin-like protein 230 (89 aa).

The first 26 residues, 1–26 (MRSVIWFIVSYTLMLLVLRGGKEVEA), serve as a signal peptide directing secretion. Disulfide bonds link Cys-30/Cys-84, Cys-40/Cys-65, Cys-48/Cys-78, and Cys-63/Cys-80.

This sequence belongs to the DEFL family.

The protein localises to the secreted. The chain is Putative defensin-like protein 230 (SCRL24) from Arabidopsis thaliana (Mouse-ear cress).